A 200-amino-acid chain; its full sequence is Putative TLC domain-containing protein L438 (200 aa).

Positions 1 to 193 constitute a TLC domain; the sequence is MDYKQSNLFL…ILKILRAKLF (193 aa). 6 consecutive transmembrane segments (helical) span residues 9–29, 43–63, 74–94, 96–116, 131–151, and 165–185; these read FLFP…CGTF, THGI…LMIV, VHHF…YYLI, YLFA…AIKY, LAFF…LWFV, and YLIV…YRIL.

It is found in the membrane. The sequence is that of Putative TLC domain-containing protein L438 from Acanthamoeba polyphaga mimivirus (APMV).